Reading from the N-terminus, the 372-residue chain is Glutamate 5-kinase (372 aa).

Lysine 14 contacts ATP. Substrate is bound by residues serine 54, aspartate 141, and asparagine 153. An ATP-binding site is contributed by 173–174; that stretch reads TD. Residues 280–358 enclose the PUA domain; the sequence is RGTLVLDDGA…ESIVRELGYM (79 aa).

It belongs to the glutamate 5-kinase family.

Its subcellular location is the cytoplasm. The enzyme catalyses L-glutamate + ATP = L-glutamyl 5-phosphate + ADP. The protein operates within amino-acid biosynthesis; L-proline biosynthesis; L-glutamate 5-semialdehyde from L-glutamate: step 1/2. Its function is as follows. Catalyzes the transfer of a phosphate group to glutamate to form L-glutamate 5-phosphate. In Pseudomonas syringae pv. syringae (strain B728a), this protein is Glutamate 5-kinase.